Consider the following 353-residue polypeptide: Pleckstrin-2 (353 aa).

N-acetylmethionine is present on M1. The region spanning 4–104 (GVLKEGFLVK…WAFEITGAIH (101 aa)) is the PH 1 domain. S120 is modified (phosphoserine). One can recognise a DEP domain in the interval 139-225 (SNTGIRSSPN…DSTALYTFAE (87 aa)). One can recognise a PH 2 domain in the interval 247–353 (TVVKQGYLAK…EWIEAIKKLT (107 aa)).

It is found in the cell projection. The protein resides in the lamellipodium membrane. The protein localises to the cytoplasm. Its subcellular location is the cytoskeleton. In terms of biological role, may help orchestrate cytoskeletal arrangement. Contribute to lamellipodia formation. This chain is Pleckstrin-2 (PLEK2), found in Homo sapiens (Human).